Consider the following 95-residue polypeptide: Nickel-cobalt-cadmium resistance protein NccY (95 aa).

The protein to A.eutrophus CnrY.

Its function is as follows. Component of the NCC cation-efflux system that confers resistance to nickel, cobalt and cadmium. May be involved in the regulation of NCC. The chain is Nickel-cobalt-cadmium resistance protein NccY (nccY) from Alcaligenes xylosoxydans xylosoxydans (Achromobacter xylosoxidans).